A 141-amino-acid chain; its full sequence is Putative nickel-responsive regulator (141 aa).

Residues histidine 83, histidine 94, histidine 96, and cysteine 102 each contribute to the Ni(2+) site.

It belongs to the transcriptional regulatory CopG/NikR family. The cofactor is Ni(2+).

Functionally, transcriptional regulator. The sequence is that of Putative nickel-responsive regulator from Methanopyrus kandleri (strain AV19 / DSM 6324 / JCM 9639 / NBRC 100938).